We begin with the raw amino-acid sequence, 258 residues long: MTQIGQYIKLNDAVPNLILHITTKLLRNENLTSFKQEELLLIQHVCTSMLSHGIKILLLRESLYNSGIGDIVILNRKISNNYWFRLFSILKQHSDAELLRHMFNESHSAYISKKLHYSGNVSHIINFLFMDEFGLSLKIPEEIICEGNIVFSVGAIYNHRLLKICRFFNRFWGDQEREPAVRLICKHLWFAYLIMFGKFEISTLAYNQQRAEHKAGLFSFLQNDFKVFCGMSENPQLLDSSAIFDLTGISAEDLFSYE.

The protein belongs to the herpesviridae UL79 family.

The chain is Protein U52 (U52) from Human herpesvirus 6B (strain Z29) (HHV-6 variant B).